Reading from the N-terminus, the 122-residue chain is Small ribosomal subunit protein uS13 (122 aa).

Positions 93-122 are disordered; sequence RLSLPVRGQRTKTNSRTRKGKRKTVAGKKK. The span at 101–122 shows a compositional bias: basic residues; sequence QRTKTNSRTRKGKRKTVAGKKK.

The protein belongs to the universal ribosomal protein uS13 family. In terms of assembly, part of the 30S ribosomal subunit. Forms a loose heterodimer with protein S19. Forms two bridges to the 50S subunit in the 70S ribosome.

Its function is as follows. Located at the top of the head of the 30S subunit, it contacts several helices of the 16S rRNA. In the 70S ribosome it contacts the 23S rRNA (bridge B1a) and protein L5 of the 50S subunit (bridge B1b), connecting the 2 subunits; these bridges are implicated in subunit movement. Contacts the tRNAs in the A and P-sites. This chain is Small ribosomal subunit protein uS13, found in Chlamydia caviae (strain ATCC VR-813 / DSM 19441 / 03DC25 / GPIC) (Chlamydophila caviae).